We begin with the raw amino-acid sequence, 367 residues long: UDP-N-acetylglucosamine--N-acetylmuramyl-(pentapeptide) pyrophosphoryl-undecaprenol N-acetylglucosamine transferase (367 aa).

UDP-N-acetyl-alpha-D-glucosamine is bound by residues 15–17, Asn127, Arg163, Ser191, Ile249, and Gln294; that span reads TGG.

Belongs to the glycosyltransferase 28 family. MurG subfamily.

Its subcellular location is the cell inner membrane. It catalyses the reaction di-trans,octa-cis-undecaprenyl diphospho-N-acetyl-alpha-D-muramoyl-L-alanyl-D-glutamyl-meso-2,6-diaminopimeloyl-D-alanyl-D-alanine + UDP-N-acetyl-alpha-D-glucosamine = di-trans,octa-cis-undecaprenyl diphospho-[N-acetyl-alpha-D-glucosaminyl-(1-&gt;4)]-N-acetyl-alpha-D-muramoyl-L-alanyl-D-glutamyl-meso-2,6-diaminopimeloyl-D-alanyl-D-alanine + UDP + H(+). It participates in cell wall biogenesis; peptidoglycan biosynthesis. In terms of biological role, cell wall formation. Catalyzes the transfer of a GlcNAc subunit on undecaprenyl-pyrophosphoryl-MurNAc-pentapeptide (lipid intermediate I) to form undecaprenyl-pyrophosphoryl-MurNAc-(pentapeptide)GlcNAc (lipid intermediate II). The polypeptide is UDP-N-acetylglucosamine--N-acetylmuramyl-(pentapeptide) pyrophosphoryl-undecaprenol N-acetylglucosamine transferase (Burkholderia vietnamiensis (strain G4 / LMG 22486) (Burkholderia cepacia (strain R1808))).